We begin with the raw amino-acid sequence, 221 residues long: Aspartic protease inhibitor 1 (221 aa).

An N-terminal signal peptide occupies residues 1 to 23; that stretch reads MMKCLFFLCLCLFPILVFSSTFT. The propeptide occupies 24–32; that stretch reads SQNPINLPS. The Vacuolar targeting signal signature appears at 26-31; the sequence is NPINLP. N-linked (GlcNAc...) asparagine glycosylation is present at asparagine 51. Cystine bridges form between cysteine 80–cysteine 125 and cysteine 174–cysteine 186.

It belongs to the protease inhibitor I3 (leguminous Kunitz-type inhibitor) family. As to expression, tubers, young leaves and flower bud. Not detected in root, stem or mature leaves.

It localises to the vacuole. Its function is as follows. Inhibitor of cathepsin D (aspartic protease). May also inhibit trypsin and chymotrypsin (serine proteases). Protects the plant by inhibiting proteases of invading organisms. This chain is Aspartic protease inhibitor 1, found in Solanum tuberosum (Potato).